Reading from the N-terminus, the 320-residue chain is Phospho-N-acetylmuramoyl-pentapeptide-transferase (320 aa).

The next 9 membrane-spanning stretches (helical) occupy residues 5–25 (FWAF…VIKF), 51–71 (MGGA…SVAY), 75–95 (IGFV…IIGG), 121–141 (LCAV…ILNI), 143–163 (FIGV…WLVG), 176–196 (GLLT…ALGV), 198–218 (NHII…FLLF), 241–261 (IESI…IFVI), and 300–320 (IDAL…LYMS).

This sequence belongs to the glycosyltransferase 4 family. MraY subfamily. Mg(2+) serves as cofactor.

The protein localises to the cell membrane. The enzyme catalyses UDP-N-acetyl-alpha-D-muramoyl-L-alanyl-gamma-D-glutamyl-L-lysyl-D-alanyl-D-alanine + di-trans,octa-cis-undecaprenyl phosphate = Mur2Ac(oyl-L-Ala-gamma-D-Glu-L-Lys-D-Ala-D-Ala)-di-trans,octa-cis-undecaprenyl diphosphate + UMP. Its pathway is cell wall biogenesis; peptidoglycan biosynthesis. Its function is as follows. Catalyzes the initial step of the lipid cycle reactions in the biosynthesis of the cell wall peptidoglycan: transfers peptidoglycan precursor phospho-MurNAc-pentapeptide from UDP-MurNAc-pentapeptide onto the lipid carrier undecaprenyl phosphate, yielding undecaprenyl-pyrophosphoryl-MurNAc-pentapeptide, known as lipid I. This is Phospho-N-acetylmuramoyl-pentapeptide-transferase from Leuconostoc mesenteroides subsp. mesenteroides (strain ATCC 8293 / DSM 20343 / BCRC 11652 / CCM 1803 / JCM 6124 / NCDO 523 / NBRC 100496 / NCIMB 8023 / NCTC 12954 / NRRL B-1118 / 37Y).